A 123-amino-acid polypeptide reads, in one-letter code: Small ribosomal subunit protein uS12 (123 aa).

D89 is modified (3-methylthioaspartic acid).

This sequence belongs to the universal ribosomal protein uS12 family. In terms of assembly, part of the 30S ribosomal subunit. Contacts proteins S8 and S17. May interact with IF1 in the 30S initiation complex.

Its function is as follows. With S4 and S5 plays an important role in translational accuracy. Functionally, interacts with and stabilizes bases of the 16S rRNA that are involved in tRNA selection in the A site and with the mRNA backbone. Located at the interface of the 30S and 50S subunits, it traverses the body of the 30S subunit contacting proteins on the other side and probably holding the rRNA structure together. The combined cluster of proteins S8, S12 and S17 appears to hold together the shoulder and platform of the 30S subunit. The sequence is that of Small ribosomal subunit protein uS12 from Brucella abortus (strain S19).